Reading from the N-terminus, the 782-residue chain is Probable cyclic di-GMP phosphodiesterase PdeI (782 aa).

2 helical membrane-spanning segments follow: residues 12-32 (LIIL…IINY) and 286-306 (LFYL…LMTT). Residues 527 to 781 (NIWIARNIRH…AWDKSGKLVK (255 aa)) form the EAL domain.

Its subcellular location is the cell membrane. It catalyses the reaction 3',3'-c-di-GMP + H2O = 5'-phosphoguanylyl(3'-&gt;5')guanosine + H(+). Its function is as follows. Phosphodiesterase (PDE) that catalyzes the hydrolysis of cyclic-di-GMP (c-di-GMP) to 5'-pGpG. Overexpression reduces biofilm formation. Cyclic-di-GMP is a second messenger which controls cell surface-associated traits in bacteria. This is Probable cyclic di-GMP phosphodiesterase PdeI from Escherichia coli (strain K12).